A 315-amino-acid chain; its full sequence is UDP-N-acetylenolpyruvoylglucosamine reductase (315 aa).

Residues 27 to 207 form the FAD-binding PCMH-type domain; sequence RVGGPADVLY…TKRMNAITAR (181 aa). The active site involves arginine 172. The segment at 214–236 is disordered; it reads IREKTSGSTFANPDPPGTPNQRK. Residue serine 221 is the Proton donor of the active site. Glutamate 297 is a catalytic residue.

The protein belongs to the MurB family. It depends on FAD as a cofactor.

The protein localises to the cytoplasm. The catalysed reaction is UDP-N-acetyl-alpha-D-muramate + NADP(+) = UDP-N-acetyl-3-O-(1-carboxyvinyl)-alpha-D-glucosamine + NADPH + H(+). The protein operates within cell wall biogenesis; peptidoglycan biosynthesis. Its function is as follows. Cell wall formation. This Maricaulis maris (strain MCS10) (Caulobacter maris) protein is UDP-N-acetylenolpyruvoylglucosamine reductase.